The chain runs to 707 residues: Alpha-hemolysin translocation ATP-binding protein HlyB (707 aa).

Residues 2–125 form the Peptidase C39 domain; it reads DFHHKNNYGL…DLYQGNIILI (124 aa). H83 is a catalytic residue. The ABC transmembrane type-1 domain maps to 154-436; it reads FIETLIVSVF…LAQLWQDFQQ (283 aa). Helical transmembrane passes span 158–178, 191–211, 269–289, 295–315, and 387–407; these read LIVS…FQVV, LNII…LSGL, ALTS…MWYY, LVIL…SPIL, and AVMI…DLSI. An ABC transporter domain is found at 468–703; the sequence is ISFRNIRFRY…PESLYHYLHQ (236 aa). 502-509 is an ATP binding site; sequence GRSGSGKS.

The protein belongs to the ABC transporter superfamily. Protein-1 exporter (TC 3.A.1.109) family.

It is found in the cell membrane. Its function is as follows. Involved in the export of hemolysin A. This Proteus vulgaris protein is Alpha-hemolysin translocation ATP-binding protein HlyB (hlyB).